The following is a 56-amino-acid chain: Large ribosomal subunit protein bL32 (56 aa).

Positions 1–16 (MAVQKNRKTRSKRGMR) are enriched in basic residues. Positions 1-37 (MAVQKNRKTRSKRGMRRSHDALGTATMSVDSTSGETH) are disordered. Positions 25–35 (ATMSVDSTSGE) are enriched in polar residues.

This sequence belongs to the bacterial ribosomal protein bL32 family.

This chain is Large ribosomal subunit protein bL32, found in Pseudoalteromonas atlantica (strain T6c / ATCC BAA-1087).